The primary structure comprises 745 residues: 5-methyltetrahydropteroyltriglutamate--homocysteine methyltransferase (745 aa).

Residues Lys19 and Asn115 each coordinate 5-methyltetrahydropteroyltri-L-glutamate. Residues 420 to 422 (IGS) and Glu473 each bind L-homocysteine. Residues 420 to 422 (IGS) and Glu473 contribute to the L-methionine site. 5-methyltetrahydropteroyltri-L-glutamate contacts are provided by residues Asp478, Tyr501, 504–505 (RA), and Trp550. Asp588 lines the L-homocysteine pocket. Asp588 contributes to the L-methionine binding site. Positions 630, 632, and 654 each coordinate Zn(2+). Catalysis depends on His683, which acts as the Proton donor. Cys715 contacts Zn(2+).

The protein belongs to the vitamin-B12 independent methionine synthase family. Zn(2+) serves as cofactor.

The enzyme catalyses 5-methyltetrahydropteroyltri-L-glutamate + L-homocysteine = tetrahydropteroyltri-L-glutamate + L-methionine. It participates in amino-acid biosynthesis; L-methionine biosynthesis via de novo pathway; L-methionine from L-homocysteine (MetE route): step 1/1. Catalyzes the transfer of a methyl group from 5-methyltetrahydrofolate to homocysteine resulting in methionine formation. The chain is 5-methyltetrahydropteroyltriglutamate--homocysteine methyltransferase from Streptococcus mutans serotype c (strain ATCC 700610 / UA159).